The following is a 130-amino-acid chain: Small ribosomal subunit protein uS9 (130 aa).

Belongs to the universal ribosomal protein uS9 family.

The protein is Small ribosomal subunit protein uS9 of Methylibium petroleiphilum (strain ATCC BAA-1232 / LMG 22953 / PM1).